Reading from the N-terminus, the 643-residue chain is Phosphatidylinositol-3,5-bisphosphate 3-phosphatase MTMR2 (643 aa).

Composition is skewed to polar residues over residues 1 to 12 and 23 to 40; these read MEKSSSCESLGS and DSLSSASTSHSENSVHTK. The segment at 1-54 is disordered; sequence MEKSSSCESLGSQPAVARPPSVDSLSSASTSHSENSVHTKSASVVSSDSISTSA. Phosphoserine occurs at positions 6 and 9. A compositionally biased stretch (low complexity) spans 41 to 54; it reads SASVVSSDSISTSA. A Phosphoserine modification is found at Ser58. A GRAM domain is found at 68-139; it reads NKLAEMEEPP…GVISRVEKIG (72 aa). The 376-residue stretch at 205-580 folds into the Myotubularin phosphatase domain; the sequence is GWKLYDSLSE…RHLELWVGYY (376 aa). A 1,2-diacyl-sn-glycero-3-phospho-(1D-myo-inositol-3,5-bisphosphate) contacts are provided by Asn330, Asn355, and Ile356. Residues Asn330, Asn355, and Ile356 each contribute to the a 1,2-diacyl-sn-glycero-3-phospho-(1D-myo-inositol-3-phosphate) site. The active-site Phosphocysteine intermediate is the Cys417. A 1,2-diacyl-sn-glycero-3-phospho-(1D-myo-inositol-3,5-bisphosphate) contacts are provided by Ser418, Asp419, Gly420, Trp421, Asp422, Arg423, Arg459, and Arg463. A 1,2-diacyl-sn-glycero-3-phospho-(1D-myo-inositol-3-phosphate) is bound by residues Ser418, Asp419, Gly420, Trp421, Asp422, and Arg423. An a 1,2-diacyl-sn-glycero-3-phospho-(1D-myo-inositol-3-phosphate)-binding site is contributed by Arg463. A coiled-coil region spans residues 593-627; sequence IHNRYKELLAKRAELQKKVEELQREISNRSTSSSE. The interval 614–643 is disordered; that stretch reads LQREISNRSTSSSERAGSPAQCVTPVQTVV.

Belongs to the protein-tyrosine phosphatase family. Non-receptor class myotubularin subfamily. In terms of assembly, homodimer (via coiled-coil domain). Heterotetramer consisting of one MTMR2 dimer and one SBF2/MTMR13 dimer; specifically in peripheral nerves stabilizes SBF2/MTMR13 at the membranes and increases MTMR2 catalytic activity towards phosphatidylinositol 3,5-bisphosphate and to a lesser extent towards phosphatidylinositol 3-phosphate. Heterodimer with SBF1/MTMR5; acts as an adapter for the phosphatase MTMR2 to regulate MTMR2 catalytic activity and subcellular location. Heterodimer with MTMR12. Post-translationally, phosphorylation at Ser-58 decreases MTMR2 localization to endocytic vesicular structures.

The protein localises to the cytoplasm. It is found in the early endosome membrane. It localises to the perinuclear region. The protein resides in the cell projection. Its subcellular location is the axon. The protein localises to the endosome membrane. The enzyme catalyses a 1,2-diacyl-sn-glycero-3-phospho-(1D-myo-inositol-3,5-bisphosphate) + H2O = a 1,2-diacyl-sn-glycero-3-phospho-(1D-myo-inositol-5-phosphate) + phosphate. It carries out the reaction a 1,2-diacyl-sn-glycero-3-phospho-(1D-myo-inositol-3-phosphate) + H2O = a 1,2-diacyl-sn-glycero-3-phospho-(1D-myo-inositol) + phosphate. The catalysed reaction is 1,2-dioctanoyl-sn-glycero-3-phospho-(1-D-myo-inositol-3-phosphate) + H2O = 1,2-dioctanoyl-sn-glycero-3-phospho-(1D-myo-inositol) + phosphate. It catalyses the reaction 1,2-dioctanoyl-sn-glycero-3-phospho-(1D-myo-inositol-3,5-bisphosphate) + H2O = 1,2-dioctanoyl-sn-glycero-3-phospho-(1D-myo-inositol-5-phosphate) + phosphate. Its function is as follows. Lipid phosphatase that specifically dephosphorylates the D-3 position of phosphatidylinositol 3-phosphate and phosphatidylinositol 3,5-bisphosphate, generating phosphatidylinositol and phosphatidylinositol 5-phosphate. Regulates the level of these phosphoinositides critical for various biological processes including autophagy initiation and autophagosome maturation. This Bos taurus (Bovine) protein is Phosphatidylinositol-3,5-bisphosphate 3-phosphatase MTMR2.